A 207-amino-acid chain; its full sequence is Large ribosomal subunit protein uL4 (207 aa).

Residues 43–52 (NKRQGTQSAK) show a composition bias toward polar residues. A disordered region spans residues 43–72 (NKRQGTQSAKTRAEVRGGGRKPWKQKGTGR). The segment covering 60 to 71 (GGRKPWKQKGTG) has biased composition (basic residues).

Belongs to the universal ribosomal protein uL4 family. In terms of assembly, part of the 50S ribosomal subunit.

In terms of biological role, one of the primary rRNA binding proteins, this protein initially binds near the 5'-end of the 23S rRNA. It is important during the early stages of 50S assembly. It makes multiple contacts with different domains of the 23S rRNA in the assembled 50S subunit and ribosome. Forms part of the polypeptide exit tunnel. This chain is Large ribosomal subunit protein uL4, found in Alkaliphilus metalliredigens (strain QYMF).